We begin with the raw amino-acid sequence, 751 residues long: CCR4-NOT transcription complex subunit 3 (751 aa).

The tract at residues alanine 240–alanine 534 is disordered. Residues serine 257–serine 268 are compositionally biased toward low complexity. Over residues aspartate 284 to aspartate 293 the composition is skewed to basic and acidic residues. Threonine 292 is modified (phosphothreonine). Positions serine 294–glutamine 315 are enriched in polar residues. Phosphoserine is present on serine 299. A compositionally biased stretch (pro residues) spans proline 317 to threonine 330. A compositionally biased stretch (polar residues) spans glycine 339–alanine 348. Positions serine 441–serine 450 are enriched in low complexity. Residues alanine 463–threonine 472 show a composition bias toward polar residues. Residues alanine 473–leucine 498 are compositionally biased toward low complexity. A Phosphoserine modification is found at serine 540. The repressor domain stretch occupies residues glutamate 659–glutamine 751.

This sequence belongs to the CNOT2/3/5 family. Component of the CCR4-NOT complex; distinct complexes seem to exist that differ in the participation of probably mutually exclusive catalytic subunits. In the complex interacts directly with CNOT2. Interacts with TIP120B and NANOS2. Interacts with EBF1. Interacts in an RNA-independent manner with BICC1 (via KH domains).

Its subcellular location is the nucleus. The protein resides in the cytoplasm. It is found in the P-body. Functionally, component of the CCR4-NOT complex which is one of the major cellular mRNA deadenylases and is linked to various cellular processes including bulk mRNA degradation, miRNA-mediated repression, translational repression during translational initiation and general transcription regulation. Additional complex functions may be a consequence of its influence on mRNA expression. May be involved in metabolic regulation; may be involved in recruitment of the CCR4-NOT complex to deadenylation target mRNAs involved in energy metabolism. Involved in mitotic progression and regulation of the spindle assembly checkpoint by regulating the stability of MAD1L1 mRNA. Can repress transcription and may link the CCR4-NOT complex to transcriptional regulation; the repressive function may involve histone deacetylases. Involved in the maintenance of embryonic stem (ES) cell identity; prevents their differentiation towards extraembryonic trophectoderm lineages. This Mus musculus (Mouse) protein is CCR4-NOT transcription complex subunit 3 (Cnot3).